Consider the following 439-residue polypeptide: U1 small nuclear ribonucleoprotein 70 kDa (439 aa).

Position 2 is an N-acetylthreonine (Thr-2). The disordered stretch occupies residues 48–79 (FEDPRDAPPPTRAETREERMERKRREKIERRQ). Positions 60 to 79 (AETREERMERKRREKIERRQ) are enriched in basic and acidic residues. Positions 92-202 (HNDPNAQGDA…GGGLGGTRRG (111 aa)) are required for interaction with U1 RNA. The RRM domain maps to 103–181 (KTLFVARVNY…RRVLVDVERG (79 aa)). Lys-118 is modified (N6-acetyllysine). Residue Tyr-126 is modified to Phosphotyrosine. The tract at residues 187 to 439 (WRPRRLGGGL…NGYLMEAAPE (253 aa)) is disordered. Gly residues predominate over residues 192-201 (LGGGLGGTRR). A compositionally biased stretch (basic and acidic residues) spans 207 to 254 (NIRHSGRDDTSRYDERPGPSPLPHRDRDRDRERERRERSRERDKERER). Phosphoserine is present on residues Ser-226 and Ser-268. Residues 255–268 (RRSRSRDRRRRSRS) show a composition bias toward basic residues. Composition is skewed to basic and acidic residues over residues 269–286 (RDKE…DKDR) and 294–310 (RSRE…EELR). Phosphoserine is present on Ser-323. Residues 346-394 (PEEKGRDRDRDRRRSHRSERERRRDRDRDRDREHKRGERGGDRGRDEAR) are compositionally biased toward basic and acidic residues. A Glycyl lysine isopeptide (Lys-Gly) (interchain with G-Cter in SUMO2) cross-link involves residue Lys-349. Residues 395–410 (GGGGGGQDNGLEGLGN) show a composition bias toward gly residues.

In terms of assembly, component of the U1 snRNP. The U1 snRNP is composed of the U1 snRNA and the 7 core Sm proteins SNRPB, SNRPD1, SNRPD2, SNRPD3, SNRPE, SNRPF and SNRPG that assemble in a heptameric protein ring on the Sm site of the small nuclear RNA to form the core snRNP, and at least three U1 snRNP-specific proteins SNRNP70/U1-70K, SNRPA/U1-A and SNRPC/U1-C. Interacts with SCNM1. Found in a pre-mRNA splicing complex with SFRS4, SFRS5, SNRNP70, SNRPA1, SRRM1 and SRRM2. Found in a pre-mRNA exonic splicing enhancer (ESE) complex with SNRNP70, SNRPA1, SRRM1 and TRA2B/SFRS10. Interacts with dephosphorylated SFRS13A and SFPQ. Interacts with NUDT21/CPSF5, CPSF6, SCAF11, and ZRANB2. Interacts with GEMIN5. Interacts with FUS. Post-translationally, extensively phosphorylated on serine residues in the C-terminal region.

The protein localises to the nucleus speckle. It is found in the nucleus. It localises to the nucleoplasm. Its function is as follows. Component of the spliceosomal U1 snRNP, which is essential for recognition of the pre-mRNA 5' splice-site and the subsequent assembly of the spliceosome. SNRNP70 binds to the loop I region of U1-snRNA. The polypeptide is U1 small nuclear ribonucleoprotein 70 kDa (SNRNP70) (Bos taurus (Bovine)).